We begin with the raw amino-acid sequence, 474 residues long: Dihydrolipoyl dehydrogenase (474 aa).

Residues 34 to 51 (EGNP…GGTC), lysine 60, and glycine 124 each bind FAD. A disulfide bridge links cysteine 51 with cysteine 56. NAD(+) is bound by residues 189-193 (GAGVI), glutamate 212, valine 246, and 278-281 (SVGR). Positions 321 and 329 each coordinate FAD. Histidine 453 serves as the catalytic Proton acceptor.

Belongs to the class-I pyridine nucleotide-disulfide oxidoreductase family. The cofactor is FAD.

The protein resides in the cytoplasm. The catalysed reaction is N(6)-[(R)-dihydrolipoyl]-L-lysyl-[protein] + NAD(+) = N(6)-[(R)-lipoyl]-L-lysyl-[protein] + NADH + H(+). Its function is as follows. The branched-chain alpha-keto dehydrogenase complex catalyzes the overall conversion of alpha-keto acids to acyl-CoA and CO(2). It contains multiple copies of 3 enzymatic components: branched-chain alpha-keto acid decarboxylase (E1), lipoamide acyltransferase (E2) and lipoamide dehydrogenase (E3). The polypeptide is Dihydrolipoyl dehydrogenase (odhL) (Cupriavidus necator (strain ATCC 17699 / DSM 428 / KCTC 22496 / NCIMB 10442 / H16 / Stanier 337) (Ralstonia eutropha)).